A 324-amino-acid polypeptide reads, in one-letter code: Fructose-1,6-bisphosphatase class 1 (324 aa).

Residues Glu-88, Asp-107, Leu-109, and Asp-110 each coordinate Mg(2+). Substrate-binding positions include 110–113 (DGSS), Asn-199, and Lys-265. Glu-271 contributes to the Mg(2+) binding site.

Belongs to the FBPase class 1 family. As to quaternary structure, homotetramer. The cofactor is Mg(2+).

It localises to the cytoplasm. It catalyses the reaction beta-D-fructose 1,6-bisphosphate + H2O = beta-D-fructose 6-phosphate + phosphate. It participates in carbohydrate biosynthesis; gluconeogenesis. The protein is Fructose-1,6-bisphosphatase class 1 of Neisseria gonorrhoeae (strain ATCC 700825 / FA 1090).